A 503-amino-acid chain; its full sequence is Methylthioalkylmalate synthase 3, chloroplastic (503 aa).

The transit peptide at 1 to 51 (MASLLLTSSSMITTSCRSMVLRSGLPIGSSFPSLRLTRPYDKATLFVSCCS) directs the protein to the chloroplast. The Pyruvate carboxyltransferase domain maps to 85 to 359 (VRVLDTTLRD…YTKIDSRQIM (275 aa)).

This sequence belongs to the alpha-IPM synthase/homocitrate synthase family. Mn(2+) serves as cofactor. Highly expressed in roots, leaves, and siliques. Lower amounts in stems and flowers.

Its subcellular location is the plastid. The protein localises to the chloroplast. The catalysed reaction is an omega-(methylsulfanyl)-2-oxoalkanoate + acetyl-CoA + H2O = a 2-(omega-methylsulfanyl)alkylmalate + CoA + H(+). Not activated by ATP. In terms of biological role, determines the side chain length of aliphatic glucosinolate structures. Accepts all the omega-methylthio-2-oxoalkanoic acids needed to form the known C3 to C8 glucosinolates. Also able to convert pyruvate to citramalate, 2-oxoisovalerate to isopropylmalate, 4-methyl-2-oxopentanoate and 5-methyl-2-oxohexanoate for Leu-derived glucosinolates, 3-methyl-2-oxopentanoate for Ile-derived glucosinolates and phenylpyruvate to phenylethylglucosinolate. This chain is Methylthioalkylmalate synthase 3, chloroplastic (MAM3), found in Arabidopsis thaliana (Mouse-ear cress).